We begin with the raw amino-acid sequence, 471 residues long: Uronate isomerase (471 aa).

It belongs to the metallo-dependent hydrolases superfamily. Uronate isomerase family.

The enzyme catalyses D-glucuronate = D-fructuronate. It catalyses the reaction aldehydo-D-galacturonate = keto-D-tagaturonate. Its pathway is carbohydrate metabolism; pentose and glucuronate interconversion. This is Uronate isomerase from Cellvibrio japonicus (strain Ueda107) (Pseudomonas fluorescens subsp. cellulosa).